A 396-amino-acid polypeptide reads, in one-letter code: DNA polymerase IV (396 aa).

The 188-residue stretch at 5–192 folds into the UmuC domain; the sequence is IFHVDVNSAF…LPVGELFMVG (188 aa). Residues Asp9 and Asp111 each coordinate Mg(2+). The active site involves Glu112.

This sequence belongs to the DNA polymerase type-Y family. As to quaternary structure, monomer. The cofactor is Mg(2+).

The protein localises to the cytoplasm. The catalysed reaction is DNA(n) + a 2'-deoxyribonucleoside 5'-triphosphate = DNA(n+1) + diphosphate. Functionally, poorly processive, error-prone DNA polymerase involved in untargeted mutagenesis. Copies undamaged DNA at stalled replication forks, which arise in vivo from mismatched or misaligned primer ends. These misaligned primers can be extended by PolIV. Exhibits no 3'-5' exonuclease (proofreading) activity. May be involved in translesional synthesis, in conjunction with the beta clamp from PolIII. This Clostridium acetobutylicum (strain ATCC 824 / DSM 792 / JCM 1419 / IAM 19013 / LMG 5710 / NBRC 13948 / NRRL B-527 / VKM B-1787 / 2291 / W) protein is DNA polymerase IV.